Here is a 196-residue protein sequence, read N- to C-terminus: Protein GrpE (196 aa).

Positions 1-40 (MSSKEQKTPEGQAPEEIIMDQHEEVEAVEPNDSAEQVDPR) are disordered.

This sequence belongs to the GrpE family. As to quaternary structure, homodimer.

Its subcellular location is the cytoplasm. In terms of biological role, participates actively in the response to hyperosmotic and heat shock by preventing the aggregation of stress-denatured proteins, in association with DnaK and GrpE. It is the nucleotide exchange factor for DnaK and may function as a thermosensor. Unfolded proteins bind initially to DnaJ; upon interaction with the DnaJ-bound protein, DnaK hydrolyzes its bound ATP, resulting in the formation of a stable complex. GrpE releases ADP from DnaK; ATP binding to DnaK triggers the release of the substrate protein, thus completing the reaction cycle. Several rounds of ATP-dependent interactions between DnaJ, DnaK and GrpE are required for fully efficient folding. The sequence is that of Protein GrpE from Salmonella enteritidis PT4 (strain P125109).